The following is a 570-amino-acid chain: Structure-specific endonuclease subunit EME1 (570 aa).

The segment covering 1-12 (MALKKSSPSLDS) has biased composition (low complexity). Residues 1–42 (MALKKSSPSLDSGDSDSEELPTFAFLKKEPSSTKRRQPEREE) form a disordered region. Phosphoserine occurs at positions 12 and 15. Basic and acidic residues predominate over residues 26 to 42 (LKKEPSSTKRRQPEREE). Phosphoserine occurs at positions 84, 85, and 87. A Glycyl lysine isopeptide (Lys-Gly) (interchain with G-Cter in SUMO2) cross-link involves residue Lys103. 2 positions are modified to phosphoserine: Ser111 and Ser117. Residues Lys136 and Lys141 each participate in a glycyl lysine isopeptide (Lys-Gly) (interchain with G-Cter in SUMO2) cross-link. Phosphothreonine is present on Thr150. Disordered stretches follow at residues 187-233 (KTNS…ERKN) and 372-400 (AQNP…ASIG). A compositionally biased stretch (basic and acidic residues) spans 220–233 (RQKESTLRRQERKN). Residues 250 to 456 (KHIIVVLDPV…PFKKLRDETT (207 aa)) are nuclease-like domain; forms the post-nick DNA binding interface and is involved in DNA recognition and bending. The helix-hairpin-helix (2HhH); forms the pre-nick DNA binding interface and is involved in DNA recognition and bending stretch occupies residues 476–570 (RGLALVWRRQ…QPHLSLDSAD (95 aa)).

It belongs to the EME1/MMS4 family. Part of the heterodimeric MUS81-EME1 complex.

The protein resides in the nucleus. Its subcellular location is the nucleolus. Non-catalytic subunit of the structure-specific, heterodimeric DNA endonuclease MUS81-EME1 which is involved in the maintenance of genome stability. In the complex, EME1 is required for DNA cleavage, participating in DNA recognition and bending. MUS81-EME1 cleaves 3'-flaps and nicked Holliday junctions, and exhibit limited endonuclease activity with 5' flaps and nicked double-stranded DNAs. Active during prometaphase, MUS81-EME1 resolves mitotic recombination intermediates, including Holliday junctions, which form during homologous recombination. This chain is Structure-specific endonuclease subunit EME1, found in Homo sapiens (Human).